A 1407-amino-acid polypeptide reads, in one-letter code: MSGIKRTIKETDPDYEDVSVALPNKRHKAIESSARDAAVQKIETIIKEQFALEMKNKEHEIDVIDQRLIEARRMMDKLRACIVANYYASAGLLKVSEGLKTFDPMAFNHPAIKKFLESPSRSSSPTNQRSETPSANHSESDSLSQHNDFLSDKDNNSNVDVEERPPSTGEQRPSRKAGRDTSSISGSHKRELRNADLTGDETSRLFVKKTIVVGNVSKYIPPDKREENDQSTHKWMVYVRGSRREPSINHFVKKVWFFLHPSYKPNDLVEVREPPFHLTRRGWGEFPVRVQVHFKDSQNKRIDIIHNLKLDRTYTGLQTLGAETVVDVELHRHSLGEDSVYPQSSESDVCDAPPPTLTLPAAVKASAVAQSPEPAAAAPVGEGFPETTEAERHSTFYSLPSSLERTPTKVTTAQKVTFSSHGNSAFQPIASSCKIVPQSQVPNPESPGKSFQPITMSCKIVSGSPISTPSPSPLPRTPTSTPVHLKQGTASSGVSNPHVIVDKPGQVIGASTPSTGSPTSKLPVASQASQGTGSPIPKIHGSSFLTSTVKQEESLFASMPPLCPIGSHPKVQSPKAVTGGLGAFTKVIIKQEPGEAPHVSTTGAASQSAFPQYVTVKGGHMIAVSPQKQVISAGEGTTQSPKIAPSKVVGVPVGSALPSTVKQAVAISSGQILVAKASSSVTKAVGPKQVVTQGVAKAIVSGGGGTIVAQPVQTLTKTQVTAAGPQKSGSQGSVMATLQLPATNLANLANLPPGTKLYLTTNSKNPSGKGKLLLIPQGAILRATNNANLQSGSAAAGGSGSSGAGGGSGGGGGSGAGGTPSTSGPGGGPQHLTYTSYILKQTPQGTFLVGQPSPQTPGKQLTTASVVQGTLGVSSSSAQGQQTLKVISGQKTTLFTQAATAGQASLLKLPDNTLKSVPAAPQLAKPGTTMLRVAGGVITAAPSPAVAFSANGAVHQSEGSTPVSSSVGSIIKTPGQPQVCVSQATMATCKGPAAVAGTAASLVSAPSSISGKATVSGLLKVHSAQSSPQQAVLTIPSQLKPLSINTSGGVQTVLMPVNKVVQSFSTSKLPTTVLPISVPNQAAPSSAPVAIAKVKTEPETPGPNCISQENQVAVKTEESSELSNYVIKVDHLETIQQLLTAVVKKIPLITAKGDDASCFSAKSLEQYYGWNIGKRRAAEWQRAMTVRKVLQEILEKNPRFHHLTPLKTKHIAHWCRCHGYTPPDPESLRHDGDSIEDVLTQIDSEPECLSSFSTADDLCRKLEDLQQFQKREPENEEEVDILSLSEPLKTNIKKEQEEKQEEMRFYLPPTPGSGFVGDITQKIGITLQPVALHRNMYASVVEDMILKATEQLVSDILRQALAVGYQTASPNRIPKEITVSNIHQAICNIPFLDFLTNKHMGRLNEDQ.

Lysine 9 participates in a covalent cross-link: Glycyl lysine isopeptide (Lys-Gly) (interchain with G-Cter in SUMO2). The stretch at 54–80 forms a coiled coil; sequence MKNKEHEIDVIDQRLIEARRMMDKLRA. Lysine 113 participates in a covalent cross-link: Glycyl lysine isopeptide (Lys-Gly) (interchain with G-Cter in SUMO2). The interval 116-196 is disordered; that stretch reads LESPSRSSSP…SHKRELRNAD (81 aa). Phosphoserine is present on residues serine 118, serine 120, and serine 157. A compositionally biased stretch (polar residues) spans 119 to 148; the sequence is PSRSSSPTNQRSETPSANHSESDSLSQHND. Over residues 149–165 the composition is skewed to basic and acidic residues; the sequence is FLSDKDNNSNVDVEERP. Lysine 189 is covalently cross-linked (Glycyl lysine isopeptide (Lys-Gly) (interchain with G-Cter in SUMO2)). Residues 201 to 346 enclose the YEATS domain; it reads ETSRLFVKKT…EDSVYPQSSE (146 aa). Histone H3K27cr binding stretches follow at residues 260–262 and 283–285; these read HPS and WGE. The residue at position 406 (threonine 406) is a Phosphothreonine. A phosphoserine mark is found at serine 446, serine 462, serine 464, serine 470, and serine 472. Residues 462–540 are disordered; it reads SGSPISTPSP…GTGSPIPKIH (79 aa). Threonine 477 carries the phosphothreonine modification. Lysine 486 is covalently cross-linked (Glycyl lysine isopeptide (Lys-Gly) (interchain with G-Cter in SUMO2)). The span at 511 to 520 shows a compositional bias: low complexity; that stretch reads STPSTGSPTS. Residue serine 534 is modified to Phosphoserine. Residue lysine 550 forms a Glycyl lysine isopeptide (Lys-Gly) (interchain with G-Cter in SUMO2) linkage. Serine 573 carries the post-translational modification Phosphoserine. A Glycyl lysine isopeptide (Lys-Gly) (interchain with G-Cter in SUMO2) cross-link involves residue lysine 590. A Phosphoserine modification is found at serine 625. Glycyl lysine isopeptide (Lys-Gly) (interchain with G-Cter in SUMO2) cross-links involve residues lysine 647 and lysine 771. The interval 791-833 is disordered; that stretch reads SGSAAAGGSGSSGAGGGSGGGGGSGAGGTPSTSGPGGGPQHLT. Residues 795–829 are compositionally biased toward gly residues; sequence AAGGSGSSGAGGGSGGGGGSGAGGTPSTSGPGGGP. Residue lysine 908 forms a Glycyl lysine isopeptide (Lys-Gly) (interchain with G-Cter in SUMO2) linkage. Lysine 1095 participates in a covalent cross-link: Glycyl lysine isopeptide (Lys-Gly) (interchain with G-Cter in SUMO1); alternate. Residue lysine 1095 forms a Glycyl lysine isopeptide (Lys-Gly) (interchain with G-Cter in SUMO2); alternate linkage. Lysine 1115 is covalently cross-linked (Glycyl lysine isopeptide (Lys-Gly) (interchain with G-Cter in SUMO2)). Phosphothreonine is present on threonine 1204. Residues lysine 1207 and lysine 1270 each participate in a glycyl lysine isopeptide (Lys-Gly) (interchain with G-Cter in SUMO2) cross-link.

Component of the ADA2A-containing complex (ATAC), composed of KAT14, KAT2A, TADA2L, TADA3L, ZZ3, MBIP, WDR5, YEATS2, SGF29 and DR1.

The protein resides in the nucleus. Its function is as follows. Chromatin reader component of the ATAC complex, a complex with histone acetyltransferase activity on histones H3 and H4. YEATS2 specifically recognizes and binds histone H3 crotonylated at 'Lys-27' (H3K27cr). Crotonylation marks active promoters and enhancers and confers resistance to transcriptional repressors. The chain is YEATS domain-containing protein 2 from Mus musculus (Mouse).